Here is a 348-residue protein sequence, read N- to C-terminus: Uroporphyrinogen decarboxylase (348 aa).

Substrate contacts are provided by residues 28–32 (RQAGR), aspartate 78, tyrosine 154, threonine 209, and histidine 325.

This sequence belongs to the uroporphyrinogen decarboxylase family. In terms of assembly, homodimer.

The protein resides in the cytoplasm. The enzyme catalyses uroporphyrinogen III + 4 H(+) = coproporphyrinogen III + 4 CO2. The protein operates within porphyrin-containing compound metabolism; protoporphyrin-IX biosynthesis; coproporphyrinogen-III from 5-aminolevulinate: step 4/4. Functionally, catalyzes the decarboxylation of four acetate groups of uroporphyrinogen-III to yield coproporphyrinogen-III. This chain is Uroporphyrinogen decarboxylase, found in Rhodopseudomonas palustris (strain HaA2).